We begin with the raw amino-acid sequence, 1085 residues long: Translation factor GUF1 homolog, mitochondrial (1085 aa).

Positions K232 to I409 constitute a tr-type G domain. Residues A241 to S248, D302 to H306, and N356 to D359 contribute to the GTP site.

The protein belongs to the TRAFAC class translation factor GTPase superfamily. Classic translation factor GTPase family. LepA subfamily.

Its subcellular location is the mitochondrion inner membrane. The enzyme catalyses GTP + H2O = GDP + phosphate + H(+). Its function is as follows. Promotes mitochondrial protein synthesis. May act as a fidelity factor of the translation reaction, by catalyzing a one-codon backward translocation of tRNAs on improperly translocated ribosomes. Binds to mitochondrial ribosomes in a GTP-dependent manner. The protein is Translation factor GUF1 homolog, mitochondrial of Plasmodium falciparum (isolate 3D7).